A 433-amino-acid chain; its full sequence is Xylose isomerase (433 aa).

Active-site residues include His99 and Asp102. Mg(2+) is bound by residues Glu230, Glu266, His269, Asp294, Asp305, Asp307, and Asp337.

It belongs to the xylose isomerase family. In terms of assembly, homotetramer. Mg(2+) serves as cofactor.

The protein resides in the cytoplasm. The enzyme catalyses alpha-D-xylose = alpha-D-xylulofuranose. In Cereibacter sphaeroides (strain ATCC 17023 / DSM 158 / JCM 6121 / CCUG 31486 / LMG 2827 / NBRC 12203 / NCIMB 8253 / ATH 2.4.1.) (Rhodobacter sphaeroides), this protein is Xylose isomerase.